Consider the following 260-residue polypeptide: Exosome complex component Rrp42 (260 aa).

This sequence belongs to the RNase PH family. Rrp42 subfamily. Component of the archaeal exosome complex. Forms a hexameric ring-like arrangement composed of 3 Rrp41-Rrp42 heterodimers. The hexameric ring associates with a trimer of Rrp4 and/or Csl4 subunits.

It is found in the cytoplasm. Its function is as follows. Non-catalytic component of the exosome, which is a complex involved in RNA degradation. Contributes to the structuring of the Rrp41 active site. This is Exosome complex component Rrp42 from Methanocella arvoryzae (strain DSM 22066 / NBRC 105507 / MRE50).